Consider the following 342-residue polypeptide: MTIALTGGGTGGHLAIVRCLLESAIKKNIECVYIGSQNGQDKAWFENEVRFKEKFFLSSKGVVNQSKFDKISSLLHTLKLSKDCREIFKKYHIQAVFSVGGYSAAPASFAALFSHLPLFIHEQNSKSGSLNMLLKPFATKFFSAFEKEISPYPVADKFFDNARIRKELKNIIFLGGSQGAQFINELALNLAPKLQEQNIKIIHQCGKNDFEKCKKHYQSLNIQADIFDFSLNLEEKMKNADLAISRAGASTLFELCANTLPTIFIPYPYAAKNHQYFNAKFLQDQALCQIFMQNSINLDEFFKSILKLNLENISTRLQNITQKNGADMLIQKALFDNLTFIR.

UDP-N-acetyl-alpha-D-glucosamine-binding positions include 10-12 (TGG), N124, S177, and Q275.

The protein belongs to the glycosyltransferase 28 family. MurG subfamily.

Its subcellular location is the cell inner membrane. The enzyme catalyses di-trans,octa-cis-undecaprenyl diphospho-N-acetyl-alpha-D-muramoyl-L-alanyl-D-glutamyl-meso-2,6-diaminopimeloyl-D-alanyl-D-alanine + UDP-N-acetyl-alpha-D-glucosamine = di-trans,octa-cis-undecaprenyl diphospho-[N-acetyl-alpha-D-glucosaminyl-(1-&gt;4)]-N-acetyl-alpha-D-muramoyl-L-alanyl-D-glutamyl-meso-2,6-diaminopimeloyl-D-alanyl-D-alanine + UDP + H(+). It functions in the pathway cell wall biogenesis; peptidoglycan biosynthesis. Functionally, cell wall formation. Catalyzes the transfer of a GlcNAc subunit on undecaprenyl-pyrophosphoryl-MurNAc-pentapeptide (lipid intermediate I) to form undecaprenyl-pyrophosphoryl-MurNAc-(pentapeptide)GlcNAc (lipid intermediate II). This Campylobacter jejuni subsp. jejuni serotype O:2 (strain ATCC 700819 / NCTC 11168) protein is UDP-N-acetylglucosamine--N-acetylmuramyl-(pentapeptide) pyrophosphoryl-undecaprenol N-acetylglucosamine transferase.